A 434-amino-acid chain; its full sequence is Putative G3BP-like protein (434 aa).

The NTF2 domain occupies 18 to 134; sequence IGWMFVQEYY…YFVLNDIFRF (117 aa). Disordered stretches follow at residues 141-180 and 274-308; these read EEEE…EGHY and VKSQ…PYTQ. Ser-145 carries the phosphoserine modification. The span at 148–157 shows a compositional bias: basic and acidic residues; sequence AVEKEKKDVA. Over residues 276 to 291 the composition is skewed to low complexity; that stretch reads SQASVSSTASTTGQTV. Polar residues predominate over residues 296 to 308; the sequence is ADQTQQPTAPYTQ. In terms of domain architecture, RRM spans 315–386; sequence TSVFVKNIPP…ATLNIEERRR (72 aa). The tract at residues 390 to 434 is disordered; that stretch reads GKFNKSGDKKSNDNYNGMKRNFRKGNRGAFDGRSKEVTTSKKQNN. Positions 419–428 are enriched in basic and acidic residues; it reads FDGRSKEVTT.

Probable scaffold protein that may be involved in mRNA transport. In Schizosaccharomyces pombe (strain 972 / ATCC 24843) (Fission yeast), this protein is Putative G3BP-like protein (nxt3).